We begin with the raw amino-acid sequence, 327 residues long: GMP reductase (327 aa).

The Thioimidate intermediate role is filled by C175. NADP(+) is bound at residue 204–227 (IIADGGIRTNGDVAKSIRFGATMV).

This sequence belongs to the IMPDH/GMPR family. GuaC type 2 subfamily.

The catalysed reaction is IMP + NH4(+) + NADP(+) = GMP + NADPH + 2 H(+). Functionally, catalyzes the irreversible NADPH-dependent deamination of GMP to IMP. It functions in the conversion of nucleobase, nucleoside and nucleotide derivatives of G to A nucleotides, and in maintaining the intracellular balance of A and G nucleotides. The sequence is that of GMP reductase from Bacillus anthracis.